The sequence spans 94 residues: Small ribosomal subunit protein uS19 (94 aa).

Belongs to the universal ribosomal protein uS19 family.

Functionally, protein S19 forms a complex with S13 that binds strongly to the 16S ribosomal RNA. This chain is Small ribosomal subunit protein uS19, found in Carboxydothermus hydrogenoformans (strain ATCC BAA-161 / DSM 6008 / Z-2901).